The primary structure comprises 293 residues: Porphobilinogen deaminase (293 aa).

C235 carries the post-translational modification S-(dipyrrolylmethanemethyl)cysteine.

It belongs to the HMBS family. In terms of assembly, monomer. The cofactor is dipyrromethane.

The enzyme catalyses 4 porphobilinogen + H2O = hydroxymethylbilane + 4 NH4(+). It functions in the pathway porphyrin-containing compound metabolism; protoporphyrin-IX biosynthesis; coproporphyrinogen-III from 5-aminolevulinate: step 2/4. Functionally, tetrapolymerization of the monopyrrole PBG into the hydroxymethylbilane pre-uroporphyrinogen in several discrete steps. The sequence is that of Porphobilinogen deaminase from Ruminiclostridium cellulolyticum (strain ATCC 35319 / DSM 5812 / JCM 6584 / H10) (Clostridium cellulolyticum).